Consider the following 756-residue polypeptide: DNA mismatch repair protein Mlh1 (756 aa).

Serine 2 carries the N-acetylserine modification. N6-acetyllysine is present on lysine 33. Residues asparagine 38, aspartate 63, 82–84 (TSK), and 100–104 (RGEAL) each bind ATP. N6-acetyllysine occurs at positions 241 and 361. Disordered regions lie at residues 355 to 378 (PSGEMVKSTTSLTSSSTSGSSDKV) and 400 to 491 (LSKP…KEMT). The span at 362-375 (STTSLTSSSTSGSS) shows a compositional bias: low complexity. Lysine 377 carries the N6-acetyllysine modification. An interaction with EXO1 region spans residues 410–650 (AIVTEDKTDI…LLIDNYVPPL (241 aa)). The span at 443–457 (KNQSLEGDTTKGTSE) shows a compositional bias: polar residues. Positions 471–474 (KRHR) match the Nuclear localization signal motif. Serine 477 bears the Phosphoserine mark.

It belongs to the DNA mismatch repair MutL/HexB family. In terms of assembly, component of the DNA mismatch repair (MMR) complex composed at least of MSH2, MSH3, MSH6, PMS1 and MLH1. Heterodimer of MLH1 and PMS2 (MutL alpha), MLH1 and PMS1 (MutL beta) or MLH1 and MLH3 (MutL gamma). Forms a ternary complex with MutS alpha (MSH2-MSH6) or MutS beta (MSH2-MSH3). Part of the BRCA1-associated genome surveillance complex (BASC), which contains BRCA1, MSH2, MSH6, MLH1, ATM, BLM, PMS2 and the RAD50-MRE11-NBS1 protein complex. This association could be a dynamic process changing throughout the cell cycle and within subnuclear domains. Interacts with MCM9; the interaction recruits MLH1 to chromatin. Interacts with MCM8. Interacts with PMS2; this interaction promotes MLH1 stability. Interacts with MBD4. Interacts with EXO1. Interacts with MTMR15/FAN1. Post-translationally, acetylated. Deacetylated by HDAC6 which prevents the MutL alpha complex, formed by the MLH1-PMS2 heterodimer, from being recruited to the MutS alpha complex, formed by the MSH2-MSH6 heterodimer, leading to tolerance of DNA damage. In terms of processing, ubiquitinated by UBR4; leading to proteasomal degradation. This ubiquitination is counteracted by the deubiquitinase USP5. As to expression, colon, lymphocytes, breast, lung, spleen, testis, prostate, thyroid, gall bladder and heart.

Its subcellular location is the nucleus. The protein localises to the chromosome. Its function is as follows. Heterodimerizes with PMS2 to form MutL alpha, a component of the post-replicative DNA mismatch repair system (MMR). DNA repair is initiated by MutS alpha (MSH2-MSH6) or MutS beta (MSH2-MSH3) binding to a dsDNA mismatch, then MutL alpha is recruited to the heteroduplex. Assembly of the MutL-MutS-heteroduplex ternary complex in presence of RFC and PCNA is sufficient to activate endonuclease activity of PMS2. It introduces single-strand breaks near the mismatch and thus generates new entry points for the exonuclease EXO1 to degrade the strand containing the mismatch. DNA methylation would prevent cleavage and therefore assure that only the newly mutated DNA strand is going to be corrected. MutL alpha (MLH1-PMS2) interacts physically with the clamp loader subunits of DNA polymerase III, suggesting that it may play a role to recruit the DNA polymerase III to the site of the MMR. Also implicated in DNA damage signaling, a process which induces cell cycle arrest and can lead to apoptosis in case of major DNA damages. Heterodimerizes with MLH3 to form MutL gamma which plays a role in meiosis. The polypeptide is DNA mismatch repair protein Mlh1 (MLH1) (Homo sapiens (Human)).